A 288-amino-acid chain; its full sequence is Prepilin leader peptidase/N-methyltransferase (288 aa).

The helical transmembrane segment at 14-34 (FITLATVLGLLVGSFLNVVVY) threads the bilayer. 4 residues coordinate Zn(2+): cysteine 71, cysteine 74, cysteine 96, and cysteine 99. The next 6 helical transmembrane spans lie at 103-123 (ISVR…VVAW), 127-147 (ASVE…LSLI), 158-178 (IVLP…WVPL), 182-202 (VCGA…FKLV), 227-247 (VLPL…VYLL), and 254-274 (MGTA…AVLW).

This sequence belongs to the peptidase A24 family. It depends on Zn(2+) as a cofactor.

Its subcellular location is the cell inner membrane. It carries out the reaction Typically cleaves a -Gly-|-Phe- bond to release an N-terminal, basic peptide of 5-8 residues from type IV prepilin, and then N-methylates the new N-terminal amino group, the methyl donor being S-adenosyl-L-methionine.. Its function is as follows. Plays an essential role in type IV pili and type II pseudopili formation by proteolytically removing the leader sequence from substrate proteins and subsequently monomethylating the alpha-amino group of the newly exposed N-terminal phenylalanine. This is Prepilin leader peptidase/N-methyltransferase (pilD) from Pseudomonas putida (Arthrobacter siderocapsulatus).